The primary structure comprises 130 residues: DUF35 domain-containing scaffold protein (130 aa).

The Zn(2+) site is built by Cys20, Cys23, Cys34, and Cys37.

The protein belongs to the scaffold protein DUF35 family. In terms of assembly, interacts with acetoacetyl-CoA thiolase and HMG-CoA synthase (HMGCS) that catalyzes the first and second step in the mevalonate pathway, respectively.

Functionally, functions as a scaffold to connect the acetoacetyl-CoA thiolase and HMG-CoA synthase (HMGCS) dimers in the channeling thiolase/HMGCS complex, which allows for efficient coupling of the endergonic thiolase reaction with the exergonic HMGCS reaction. The polypeptide is DUF35 domain-containing scaffold protein (Methanothermococcus thermolithotrophicus (Methanococcus thermolithotrophicus)).